The sequence spans 147 residues: Large ribosomal subunit protein uL15 (147 aa).

Residues 1-55 (MKLHEIAPQPGSTKRRRRVGRGVSAGQGASCGLGMRGQKSRSGTGTRPGFEGGQM) form a disordered region. Residues 23–35 (VSAGQGASCGLGM) are compositionally biased toward gly residues.

It belongs to the universal ribosomal protein uL15 family. As to quaternary structure, part of the 50S ribosomal subunit.

Functionally, binds to the 23S rRNA. This is Large ribosomal subunit protein uL15 from Microcystis aeruginosa (strain NIES-843 / IAM M-2473).